A 483-amino-acid chain; its full sequence is FAD-linked oxidoreductase pgmH (483 aa).

The 162-residue stretch at Ser-54–Gln-215 folds into the FAD-binding PCMH-type domain.

This sequence belongs to the oxygen-dependent FAD-linked oxidoreductase family. Requires FAD as cofactor.

Its pathway is pigment biosynthesis. The protein operates within secondary metabolite biosynthesis. Its function is as follows. FAD-linked oxidoreductase; part of the gene cluster that mediates the biosynthesis of pleosporalin A, ascomycone A, as well as a third cryptic naphthoquinone derived pigment, all responsible for the coloration of conidia. Essential for the production of pleosporalin A, but not the 2 other final products. The pathway begins with the biosynthesis of the cyclized heptaketide 3-acetonyl-1,6,8-trihydroxy-2-naphthaldehyde by the NR-PKS pgmA. The C-6 hydroxyl group is further methylated by the O-methyltransferase pgmB to yield fusarubinaldehyde which is in turn oxidized by the cytochrome P450 monooxygenase pgmC at C-9. The C-1 hydroxyl group is then methylated spontaneously. Although pgmE, pgmD and pgmH are essential for the production of pleosporalin A, it is not the case for the 2 other final products and it remains difficult to assign a specific function to each enzyme. PgmF and pgmG seem not to be involved in pigment biosynthesis although they were regulated by the cluster-specific transcription factor pgmR. This is FAD-linked oxidoreductase pgmH from Aspergillus terreus (strain NIH 2624 / FGSC A1156).